The following is a 222-amino-acid chain: uncharacterized protein (222 aa).

N-linked (GlcNAc...) asparagine; by host glycosylation is found at asparagine 4, asparagine 75, asparagine 84, asparagine 104, asparagine 170, and asparagine 175. A helical transmembrane segment spans residues 200-220 (LIIIIGIVIILLLIIVMIKTV).

The protein resides in the membrane. This is an uncharacterized protein from Acanthamoeba polyphaga (Amoeba).